The sequence spans 465 residues: Polyadenylation factor subunit 2 (465 aa).

Positions 1-20 (MDGHNQNQYQNQNQIQQSQQ) are enriched in low complexity. The interval 1–26 (MDGHNQNQYQNQNQIQQSQQPPLKKY) is disordered. WD repeat units lie at residues 133-163 (AHDS…KIWQ), 175-205 (AHTE…KIWN), 217-247 (GHHW…KLWD), 259-290 (KFKH…RVFD), and 348-378 (AHDK…RFWT). The disordered stretch occupies residues 417 to 465 (EFGAAPPPPATLEPHALPNMNGFINKKPRQEIPGIDSNIKSSTLPGLSI). Polar residues predominate over residues 454–465 (NIKSSTLPGLSI).

As to quaternary structure, component of the cleavage and polyadenylation factor (CPF) complex, which is composed of at least PTI1, SYC1, SSU72, GLC7, MPE1, REF2, PFS2, PTA1, YSH1/BRR5, SWD2, CFT2/YDH1, YTH1, CFT1/YHH1, FIP1 and PAP1. Interacts with YSH1/BRR5, FIP1 and RNA14.

It is found in the nucleus. Its function is as follows. Integral and essential component of the cleavage and polyadenylation factor (CPF) complex, which plays a key role in polyadenylation-dependent pre-mRNA 3'-end formation and cooperates with cleavage factors including the CFIA complex and NAB4/CFIB. May bridge the CPF and CFIA complexes. The protein is Polyadenylation factor subunit 2 (PFS2) of Saccharomyces cerevisiae (strain ATCC 204508 / S288c) (Baker's yeast).